The primary structure comprises 471 residues: MKIKTRFAPSPTGYLHVGGARTALYSWLFARNHGGEFVLRIEDTDLERSTPEAIEAIMDGMNWLNLEWDEGPYYQTKRFDRYNAVIDQMLEEGTAYKCYCSKERLEALREEQMAKGEKPRYDGRCRHSHEHHADDEPCVVRFANPQEGSVVFDDQIRGPIEFSNQELDDLIIRRTDGSPTYNFCVVVDDWDMEITHVIRGEDHINNTPRQINILKALKAPVPVYAHVSMINGDDGKKLSKRHGAVSVMQYRDDGYLPEALLNYLVRLGWSHGDQEIFTREEMIKYFALNAVSKSASAFNTDKLLWLNHHYINALPPEYVATHLQWHIEQENIDTRNGPQLADLVKLLGERCKTLKEMAQSCRYFYEDFAEFDADAAKKHLRPVARQPLEVVRDKLTAITDWTAENVHHAIQATADELEVGMGKVGMPLRVAVTGAGQSPALDVTVHAIGKTRSIERINKALAFIAERENQQ.

Residues 9-19 (PSPTGYLHVGG) carry the 'HIGH' region motif. Zn(2+)-binding residues include C98, C100, C125, and H127. The 'KMSKS' region signature appears at 237 to 241 (KLSKR). Position 240 (K240) interacts with ATP.

This sequence belongs to the class-I aminoacyl-tRNA synthetase family. Glutamate--tRNA ligase type 1 subfamily. As to quaternary structure, monomer. Zn(2+) serves as cofactor.

The protein resides in the cytoplasm. The enzyme catalyses tRNA(Glu) + L-glutamate + ATP = L-glutamyl-tRNA(Glu) + AMP + diphosphate. In terms of biological role, catalyzes the attachment of glutamate to tRNA(Glu) in a two-step reaction: glutamate is first activated by ATP to form Glu-AMP and then transferred to the acceptor end of tRNA(Glu). The protein is Glutamate--tRNA ligase of Escherichia coli O6:K15:H31 (strain 536 / UPEC).